The chain runs to 902 residues: Chloride channel protein 2 (902 aa).

Residues 1 to 89 (MAASAAAAGE…RCHKFLVSRV (89 aa)) are Cytoplasmic-facing. The segment at 18–36 (QYEQTLMYGRYTQELGAFA) is essential for channel gating by both voltage and cell volume. At T22 the chain carries Phosphothreonine. Residues 38 to 51 (EEAARIRLGGPEPW) are modulates channel gating by both voltage and cell volume. Transmembrane regions (helical) follow at residues 90–123 (GEDW…AQQW) and 132–157 (ILLQ…TQIL). Residues 163–167 (GSGIP) carry the Selectivity filter part_1 motif. Positions 166-173 (IPEMKTIL) form an intramembrane region, helical. A run of 2 helical transmembrane segments spans residues 182–200 (LTLK…ALGS) and 207–225 (EGPF…SKFL). Positions 205–209 (GKEGP) match the Selectivity filter part_2 motif. 2 intramembrane regions (helical) span residues 241-253 (MLAA…VGCC) and 257-265 (PIGGVLFSI). The next 5 helical transmembrane spans lie at 277-297 (YWRG…LAVW), 323-351 (LPAF…VQVM), 360-379 (FLMR…ISTL), 431-451 (ANVF…SALA), and 459-482 (GAFM…MAAW). The Selectivity filter part_3 signature appears at 459–463 (GAFMP). The helical intramembrane region spans 499-513 (GGYAVVGAAALAGAV). An intramembrane region (note=Loop between two helices) is located at residues 514–515 (TH). The segment at residues 516 to 527 (TVSTAVIVFELT) is an intramembrane region (helical). An intramembrane region (note=Loop between two helices) is located at residues 528–532 (GQIAH). Residues 533-550 (ILPVMIAVILANAVAQSL) traverse the membrane as a helical segment. The Cytoplasmic segment spans residues 551–902 (QPSLYDSIIR…SPSDSDDKCQ (352 aa)). The 59-residue stretch at 586–644 (MVRDVPYVALNCTFRDLRLALHRTKGRMLALVESSESMILLGSIERSQVVTLLGAQLSA) folds into the CBS 1 domain. Residues 648-748 (RQHIQERRKA…TSDLEKPESC (101 aa)) form a disordered region. Polar residues-rich tracts occupy residues 671–683 (PESS…NTED) and 706–719 (SNAS…TGSM). The region spanning 794-854 (IDPAPFQLVE…GSVTAQGVKV (61 aa)) is the CBS 2 domain. A Basolateral membrane sorting motif is present at residues 816-817 (LL). The tract at residues 860–902 (SFRDSATSSSDTETTEVHALWGPHSCHGLPRDGSPSDSDDKCQ) is disordered.

The protein belongs to the chloride channel (TC 2.A.49) family. ClC-2/CLCN2 subfamily. In terms of assembly, homodimer. Interacts with auxiliary subunit HEPACAM.

The protein resides in the cell membrane. It localises to the basolateral cell membrane. Its subcellular location is the cell projection. It is found in the dendritic spine membrane. The protein localises to the axon. The catalysed reaction is chloride(in) = chloride(out). It catalyses the reaction thiocyanate(in) = thiocyanate(out). The enzyme catalyses bromide(in) = bromide(out). It carries out the reaction nitrate(in) = nitrate(out). The catalysed reaction is iodide(out) = iodide(in). With respect to regulation, common gate kinetics are down-regulated by intracellular ATP. Inhibited by AK-42, a derivative of meclofenamate. Inhibited by Cd(2+). Inhibited by Zn(2+) and PKC activation. Inhibited at acidic pH. CCLN2:HEPACAM channel conductance is up-regulated upon hypo-osmolarity. In terms of biological role, voltage-gated and osmosensitive chloride channel. Forms a homodimeric channel where each subunit has its own ion conduction pathway. Conducts double-barreled currents controlled by two types of gates, two fast glutamate gates that control each subunit independently and a slow common gate that opens and shuts off both subunits simultaneously. Displays inward rectification currents activated upon membrane hyperpolarization and extracellular hypotonicity. Contributes to chloride conductance involved in neuron excitability. In hippocampal neurons, generates a significant part of resting membrane conductance and provides an additional chloride efflux pathway to prevent chloride accumulation in dendrites upon GABA receptor activation. In glia, associates with the auxiliary subunit HEPACAM/GlialCAM at astrocytic processes and myelinated fiber tracts where it may regulate transcellular chloride flux buffering extracellular chloride and potassium concentrations. Regulates aldosterone production in adrenal glands. The opening of CLCN2 channels at hyperpolarized membrane potentials in the glomerulosa causes cell membrane depolarization, activation of voltage-gated calcium channels and increased expression of aldosterone synthase, the rate-limiting enzyme for aldosterone biosynthesis. Contributes to chloride conductance in retinal pigment epithelium involved in phagocytosis of shed photoreceptor outer segments and photoreceptor renewal. Conducts chloride currents at the basolateral membrane of epithelial cells with a role in chloride reabsorption rather than secretion. Permeable to small monovalent anions with chloride &gt; thiocyanate &gt; bromide &gt; nitrate &gt; iodide ion selectivity. The polypeptide is Chloride channel protein 2 (CLCN2) (Cavia porcellus (Guinea pig)).